The following is a 243-amino-acid chain: Sugar fermentation stimulation protein homolog (243 aa).

Belongs to the SfsA family.

This is Sugar fermentation stimulation protein homolog from Acaryochloris marina (strain MBIC 11017).